The primary structure comprises 693 residues: Exocyst complex component 7 (693 aa).

Ser236 carries the phosphoserine modification. Residues 236 to 259 form a disordered region; it reads SWGHEALRPRHSGRQTEPKKTTSA.

The protein belongs to the EXO70 family. The exocyst complex is composed of Sec3/Exoc1, Sec5/Exoc2, Sec6/Exoc3, Sec8/Exoc4, Sec10/Exoc5, Sec15/Exoc6, Exo70/Exoc7 and Exo84/Exoc8.

Its function is as follows. Required for exocytosis. Thought to function in intracellular vesicle targeting and docking before SNARE complex formation. The sequence is that of Exocyst complex component 7 from Drosophila melanogaster (Fruit fly).